Here is a 168-residue protein sequence, read N- to C-terminus: Cyclic pyranopterin monophosphate synthase (168 aa).

Substrate contacts are provided by residues 75-77 (MCH) and 115-116 (ME). Aspartate 130 is an active-site residue.

This sequence belongs to the MoaC family. As to quaternary structure, homohexamer; trimer of dimers.

The catalysed reaction is (8S)-3',8-cyclo-7,8-dihydroguanosine 5'-triphosphate = cyclic pyranopterin phosphate + diphosphate. Its pathway is cofactor biosynthesis; molybdopterin biosynthesis. Catalyzes the conversion of (8S)-3',8-cyclo-7,8-dihydroguanosine 5'-triphosphate to cyclic pyranopterin monophosphate (cPMP). The chain is Cyclic pyranopterin monophosphate synthase from Bacillus licheniformis (strain ATCC 14580 / DSM 13 / JCM 2505 / CCUG 7422 / NBRC 12200 / NCIMB 9375 / NCTC 10341 / NRRL NRS-1264 / Gibson 46).